Consider the following 802-residue polypeptide: Penicillin G acylase (802 aa).

The signal sequence occupies residues 1–24 (MKTKWLISVIILFVFIFPQNLVFA). E177 provides a ligand contact to Ca(2+). Positions 235–265 (SAVIKASEKVGKERENFVQTSEELGLPLKIG) are cleaved as a propeptide — spacer peptide. The active-site Nucleophile is S266. A Ca(2+)-binding site is contributed by D341.

This sequence belongs to the peptidase S45 family. As to quaternary structure, heterodimer of an alpha subunit and a beta subunit processed from the same precursor. Ca(2+) serves as cofactor.

It localises to the secreted. It carries out the reaction a penicillin + H2O = 6-aminopenicillanate + a carboxylate. This Priestia megaterium (Bacillus megaterium) protein is Penicillin G acylase (pac).